We begin with the raw amino-acid sequence, 313 residues long: D-alanine--D-alanine ligase (313 aa).

An ATP-grasp domain is found at 108 to 308 (KLVWQQLGIP…YQELVVGVLA (201 aa)). Position 138–193 (138–193 (VAKLGLPLFVKPASEGSSVAVIKVKSADALPAALIEAVKYDKIVVVEKSVEGGGEY)) interacts with ATP. Mg(2+) is bound by residues Asp262, Glu275, and Asn277.

The protein belongs to the D-alanine--D-alanine ligase family. Mg(2+) serves as cofactor. It depends on Mn(2+) as a cofactor.

It localises to the cytoplasm. It catalyses the reaction 2 D-alanine + ATP = D-alanyl-D-alanine + ADP + phosphate + H(+). It functions in the pathway cell wall biogenesis; peptidoglycan biosynthesis. Functionally, cell wall formation. The chain is D-alanine--D-alanine ligase from Paraburkholderia phytofirmans (strain DSM 17436 / LMG 22146 / PsJN) (Burkholderia phytofirmans).